The primary structure comprises 460 residues: Probable lipid II flippase MurJ (460 aa).

A run of 11 helical transmembrane segments spans residues 4–24 (ILGA…PNLF), 50–70 (FASL…LLVA), 95–115 (IVAI…LGAL), 122–142 (FFAS…ALLI), 155–175 (LSYG…YPLV), 228–248 (IASF…VSYL), 257–277 (LPLA…IAIA), 292–312 (KAWF…IMLS), 336–356 (VFSL…FSLW), 366–386 (AAKI…SLMP), and 428–448 (LVIL…KSWV).

Belongs to the MurJ/MviN family.

Its subcellular location is the cell inner membrane. It functions in the pathway cell wall biogenesis; peptidoglycan biosynthesis. Involved in peptidoglycan biosynthesis. Transports lipid-linked peptidoglycan precursors from the inner to the outer leaflet of the cytoplasmic membrane. The sequence is that of Probable lipid II flippase MurJ from Helicobacter pylori (strain J99 / ATCC 700824) (Campylobacter pylori J99).